A 522-amino-acid chain; its full sequence is Ribonuclease Y (522 aa).

A helical membrane pass occupies residues Ser7 to Ser23. In terms of domain architecture, KH spans Leu212–Asp278. The region spanning Ala338–Ala431 is the HD domain.

This sequence belongs to the RNase Y family.

The protein resides in the cell membrane. Functionally, endoribonuclease that initiates mRNA decay. The chain is Ribonuclease Y from Sulfurimonas denitrificans (strain ATCC 33889 / DSM 1251) (Thiomicrospira denitrificans (strain ATCC 33889 / DSM 1251)).